A 338-amino-acid chain; its full sequence is Selenocysteine methyltransferase (338 aa).

Residues 1-327 (MSSPLITDFL…DTIRGIYKIL (327 aa)) enclose the Hcy-binding domain. Residues Cys245, Cys312, and Cys313 each contribute to the Zn(2+) site.

In terms of assembly, monomer. The cofactor is Zn(2+). In terms of tissue distribution, present in all tissues tested.

The enzyme catalyses S-methyl-L-methionine + L-selenocysteine = Se-methyl-L-selenocysteine + L-methionine + H(+). Functionally, catalyzes the methylation of selenocysteine with S-methylmethionine as donor. Does not methylate cysteine. The polypeptide is Selenocysteine methyltransferase (SMTA) (Astragalus bisulcatus (Two-grooved milkvetch)).